The chain runs to 176 residues: Ribosome maturation factor RimM (176 aa).

Residues 103-176 (QNDEYYFYEI…KIVVKELEWI (74 aa)) form the PRC barrel domain.

This sequence belongs to the RimM family. In terms of assembly, binds ribosomal protein uS19.

It localises to the cytoplasm. Functionally, an accessory protein needed during the final step in the assembly of 30S ribosomal subunit, possibly for assembly of the head region. Essential for efficient processing of 16S rRNA. May be needed both before and after RbfA during the maturation of 16S rRNA. It has affinity for free ribosomal 30S subunits but not for 70S ribosomes. In Thermotoga neapolitana (strain ATCC 49049 / DSM 4359 / NBRC 107923 / NS-E), this protein is Ribosome maturation factor RimM.